The sequence spans 495 residues: Probable cytosol aminopeptidase (495 aa).

The Mn(2+) site is built by Lys-266 and Asp-271. Lys-278 is a catalytic residue. Mn(2+) is bound by residues Asp-289, Asp-348, and Glu-350. The active site involves Arg-352.

It belongs to the peptidase M17 family. Mn(2+) serves as cofactor.

The protein resides in the cytoplasm. The enzyme catalyses Release of an N-terminal amino acid, Xaa-|-Yaa-, in which Xaa is preferably Leu, but may be other amino acids including Pro although not Arg or Lys, and Yaa may be Pro. Amino acid amides and methyl esters are also readily hydrolyzed, but rates on arylamides are exceedingly low.. The catalysed reaction is Release of an N-terminal amino acid, preferentially leucine, but not glutamic or aspartic acids.. Presumably involved in the processing and regular turnover of intracellular proteins. Catalyzes the removal of unsubstituted N-terminal amino acids from various peptides. This Pseudomonas aeruginosa (strain UCBPP-PA14) protein is Probable cytosol aminopeptidase.